A 769-amino-acid polypeptide reads, in one-letter code: 5-methyltetrahydropteroyltriglutamate--homocysteine methyltransferase (769 aa).

5-methyltetrahydropteroyltri-L-glutamate is bound by residues 16–19 (RELK) and K118. L-homocysteine-binding positions include 440–442 (IGS) and E493. Residues 440–442 (IGS) and E493 contribute to the L-methionine site. Residues 524 to 525 (RC) and W570 contribute to the 5-methyltetrahydropteroyltri-L-glutamate site. D608 provides a ligand contact to L-homocysteine. Residue D608 participates in L-methionine binding. E614 contributes to the 5-methyltetrahydropteroyltri-L-glutamate binding site. Zn(2+) is bound by residues H650, C652, and E674. The active-site Proton donor is H706. C738 lines the Zn(2+) pocket.

This sequence belongs to the vitamin-B12 independent methionine synthase family. Zn(2+) serves as cofactor.

It catalyses the reaction 5-methyltetrahydropteroyltri-L-glutamate + L-homocysteine = tetrahydropteroyltri-L-glutamate + L-methionine. Its pathway is amino-acid biosynthesis; L-methionine biosynthesis via de novo pathway; L-methionine from L-homocysteine (MetE route): step 1/1. Functionally, catalyzes the transfer of a methyl group from 5-methyltetrahydrofolate to homocysteine resulting in methionine formation. In Acidiphilium cryptum (strain JF-5), this protein is 5-methyltetrahydropteroyltriglutamate--homocysteine methyltransferase.